A 308-amino-acid chain; its full sequence is Porphobilinogen deaminase (308 aa).

Cysteine 241 is modified (S-(dipyrrolylmethanemethyl)cysteine).

Belongs to the HMBS family. As to quaternary structure, monomer. Dipyrromethane is required as a cofactor.

The catalysed reaction is 4 porphobilinogen + H2O = hydroxymethylbilane + 4 NH4(+). Its pathway is porphyrin-containing compound metabolism; protoporphyrin-IX biosynthesis; coproporphyrinogen-III from 5-aminolevulinate: step 2/4. In terms of biological role, tetrapolymerization of the monopyrrole PBG into the hydroxymethylbilane pre-uroporphyrinogen in several discrete steps. The sequence is that of Porphobilinogen deaminase from Staphylococcus carnosus (strain TM300).